The following is a 490-amino-acid chain: Cytochrome P450 2C29 (490 aa).

The first 25 residues, 1–25 (MDLVVFLALTLSCLILLSLWRQSSG), serve as a signal peptide directing secretion. N6-acetyllysine occurs at positions 249, 252, and 375. Cysteine 435 lines the heme pocket.

The protein belongs to the cytochrome P450 family. It depends on heme as a cofactor. As to expression, expressed in liver as well as in extrahepatic tissues including brain, kidney, lung, heart, and intestine.

Its subcellular location is the endoplasmic reticulum membrane. It is found in the microsome membrane. It catalyses the reaction an organic molecule + reduced [NADPH--hemoprotein reductase] + O2 = an alcohol + oxidized [NADPH--hemoprotein reductase] + H2O + H(+). The catalysed reaction is (5Z,8Z,11Z,14Z)-eicosatetraenoate + reduced [NADPH--hemoprotein reductase] + O2 = 14,15-epoxy-(5Z,8Z,11Z)-eicosatrienoate + oxidized [NADPH--hemoprotein reductase] + H2O + H(+). The protein operates within lipid metabolism; arachidonate metabolism. Functionally, a cytochrome P450 monooxygenase that selectively catalyzes the epoxidation of 14,15 double bond of (5Z,8Z,11Z,14Z)-eicosatetraenoic acid (arachidonate) forming 14,15-epoxyeicosatrienoic acid (14,15-EET) regioisomer. Mechanistically, uses molecular oxygen inserting one oxygen atom into a substrate, and reducing the second into a water molecule, with two electrons provided by NADPH via cytochrome P450 reductase (CPR; NADPH--hemoprotein reductase). This chain is Cytochrome P450 2C29, found in Mus musculus (Mouse).